Here is a 315-residue protein sequence, read N- to C-terminus: Calumenin-A (315 aa).

Positions Met-1–Ser-19 are cleaved as a signal peptide. EF-hand domains are found at residues Glu-68–Lys-103, Tyr-104–Asp-139, Gln-151–Glu-186, Met-188–Glu-223, Trp-229–Asp-264, and His-265–Ser-300. Positions 81, 83, 85, 92, 117, 119, 121, 123, and 128 each coordinate Ca(2+). The N-linked (GlcNAc...) asparagine glycan is linked to Asn-131. Residues Asp-164, Asn-166, Asp-168, Glu-175, Asp-201, Asn-203, Asp-205, Glu-212, Asp-242, Asn-244, Asp-246, Lys-248, Glu-253, Asp-278, Asn-280, Asp-282, Lys-284, and Glu-289 each coordinate Ca(2+). Positions His-312 to Phe-315 match the Prevents secretion from ER motif.

This sequence belongs to the CREC family. As to quaternary structure, interacts with ggcx.

The protein localises to the endoplasmic reticulum membrane. Its subcellular location is the golgi apparatus. It localises to the secreted. It is found in the melanosome. The protein resides in the sarcoplasmic reticulum lumen. Its function is as follows. Involved in regulation of vitamin K-dependent carboxylation of multiple N-terminal glutamate residues. Seems to inhibit gamma-carboxylase ggcx. Binds 7 calcium ions with a low affinity. In Danio rerio (Zebrafish), this protein is Calumenin-A (calua).